The primary structure comprises 364 residues: Dual-specificity RNA methyltransferase RlmN (364 aa).

Catalysis depends on E91, which acts as the Proton acceptor. The region spanning 97 to 333 is the Radical SAM core domain; that stretch reads ESDRGTLCIS…VTVRKTRGDD (237 aa). Cysteines 104 and 338 form a disulfide. Positions 111, 115, and 118 each coordinate [4Fe-4S] cluster. S-adenosyl-L-methionine contacts are provided by residues 164–165, S196, 218–220, and N295; these read GE and SLH. The S-methylcysteine intermediate role is filled by C338.

Belongs to the radical SAM superfamily. RlmN family. [4Fe-4S] cluster is required as a cofactor.

It localises to the cytoplasm. The enzyme catalyses adenosine(2503) in 23S rRNA + 2 reduced [2Fe-2S]-[ferredoxin] + 2 S-adenosyl-L-methionine = 2-methyladenosine(2503) in 23S rRNA + 5'-deoxyadenosine + L-methionine + 2 oxidized [2Fe-2S]-[ferredoxin] + S-adenosyl-L-homocysteine. The catalysed reaction is adenosine(37) in tRNA + 2 reduced [2Fe-2S]-[ferredoxin] + 2 S-adenosyl-L-methionine = 2-methyladenosine(37) in tRNA + 5'-deoxyadenosine + L-methionine + 2 oxidized [2Fe-2S]-[ferredoxin] + S-adenosyl-L-homocysteine. In terms of biological role, specifically methylates position 2 of adenine 2503 in 23S rRNA and position 2 of adenine 37 in tRNAs. m2A2503 modification seems to play a crucial role in the proofreading step occurring at the peptidyl transferase center and thus would serve to optimize ribosomal fidelity. The polypeptide is Dual-specificity RNA methyltransferase RlmN (Neisseria gonorrhoeae (strain ATCC 700825 / FA 1090)).